A 689-amino-acid polypeptide reads, in one-letter code: Glycine--tRNA ligase beta subunit (689 aa).

The protein belongs to the class-II aminoacyl-tRNA synthetase family. As to quaternary structure, tetramer of two alpha and two beta subunits.

It is found in the cytoplasm. The catalysed reaction is tRNA(Gly) + glycine + ATP = glycyl-tRNA(Gly) + AMP + diphosphate. The sequence is that of Glycine--tRNA ligase beta subunit from Shigella boydii serotype 4 (strain Sb227).